The sequence spans 137 residues: Crustacean calcium-binding protein 23 (137 aa).

3 EF-hand domains span residues 27–48 (RDSS…FGLD), 62–97 (EKKA…KVVK), and 100–135 (ATEE…YSGL).

Monomer or disulfide-linked dimers.

Its function is as follows. Possibly acts as a regulatory protein and not as a calcium buffer or transport protein. This is Crustacean calcium-binding protein 23 from Homarus americanus (American lobster).